The following is a 187-amino-acid chain: Decorin-binding protein B (187 aa).

An N-terminal signal peptide occupies residues 1–20; it reads MKIGKLNSIVMVLFFDLLVA.

The protein belongs to the decorin-binding protein family.

Functionally, binds to decorin which may mediate the adherence of B.burgdorferi to collagen fibers in skin and other tissues. This is Decorin-binding protein B (dbpB) from Borreliella burgdorferi (strain N40) (Borrelia burgdorferi).